Reading from the N-terminus, the 88-residue chain is Large ribosomal subunit protein bL31B (88 aa).

This sequence belongs to the bacterial ribosomal protein bL31 family. Type B subfamily. Part of the 50S ribosomal subunit.

In Burkholderia orbicola (strain MC0-3), this protein is Large ribosomal subunit protein bL31B.